Consider the following 1703-residue polypeptide: MGSQTLQILRQGVWASVTGGWYYDPDQNTFVNALHLYIWLFLLCFPFTLYMALQPSMVIVGIYCGVIAAMFLLLKTVNYRLHHALDEGEVVEHQTRESKGSRGGTGGANDPVTRREDSNGLGDPGGGIEMADFIRQETPPVDCSSRNSYVGMDLNQRMSSTHGRTTVAKAPGSEETVIFRRERSTFRRQAVRRRHNAGSNPTPPTSLIGSPLRYALHEADRPSGVRSWYRTVKSQPSRTPSQVTVLSTSASLLARNGSTHLEGSQDKASTVGTTSLQDEFGTLTPSLYEIRGCHIGLGNFESATRRASNNIWDTDSHLSSSTSVRFYPHDLISLHHIRANRLLTMDPELLEQQDDLSPDLQDAPLGQDNPSAASAAGKTRQYYRLWLLPFLWVGLHFDRLTLLALFDRNREVLENVLAVVLAVLVAFLGSVLLIHGFFADIWVFQFCLVIASCQYSLLKSVQPDSSSPRHGHNRIIAYSRPVYFCLCCGLIWLLHYGSLRTTSSRFTLYGVALTSSLVLASARDLVIVFTLCFPIIFFVGLLPQVNTFVMYLFEQLDIHVFGGNASTSLLSALYSILRSIVTVALLYCFCYGALKENWEPHHIPVLFSVFCGLLVAVSYHLSRQSSDPSVLMYVPLSKVFPQLRSKNPEDPLSEVQDPLPEKLRASVNERLQSDLIVCVVIAVLYFAIHVSTVFIALQPYLSYVLYGLLGAVGLLTHYLLPQLRKQLPWYCFSHPLLKTKEYYQFEVRDAAHVMWFEKFHVWLLFVEKNVLYPLVILNELSGSARELASPKRLDTEVGALMITVAGLKLLRSSYSSPTYQYITILFTVLFFTLDHRHLSETLLLDLFLMSIIFSKMWELFYKLHFVYTYIAPWQITWGSAFHAFAQPFAVPHSAMLFVQAVVSSIFSTPLNPFLGSAIFITSYVRPVKFWERDYNTKRVDHSNTRLASQLDRNPGSDDNNLNSIFYEHLTRSLQHSLCGDLLLGRWGNFSTGDCFILASDYLNALVHLIEIGNGLVTFQLRGLEFRGTYCQQREVEAITEGVEEDEGCCCCEPGHLPHILSFNAAFGQRWLAWEVVVTKYVLEGYSITDNSAASMLQVFELRRILTTYYVKGIIYYVIASPKLEEWLANDTMKEGLRGCSERNYVDLDATFNPNIDEDYDHRLSGISRDSFCGVYLGWIQYCNSRRTKPLDSEKDSALVLLCFGLCVLGRRALGTAAHQMSSNLESFLYGLHALFKGDFRISSVRDEWIFADMELLRKVVVPGIRMSLKLHQDHFTSPDEYDEPAVLFEAISTHQQNLVIAHEGDPAWRSAVLSNAPSLLALRHVLDEGTNEYKIIMLNRRYLSFRVIKVNKECVRGLWAGQQQELVFLRNRNPERGSIQNAKQALRNMINSSCDQPIGYPIYVSPLTTSYCNSHPQLRHILGGPISFGNIRNFVVSTWHRLRKGCGAGCNSGGNIEDSDAGGLSCGTSQSSQSVQSGLVRHSPARASVVSQSSSYRYSSSRHSSLRTSTTGLEPCRRSSTSQLSLRTLPTSLQLRLGSTSDPAGPSSSLSSHSIPPCKRHTLVGLLGNDGLCSTVTDPLSQHHHPHHHPQQHNPTHATVRRDDISYRVQIVDVGQVLENINLSKRKELQWPDDAMRHKAGRTCWRDWSPLEGMEGHVIHRWVPCSRDPGSRSHIDKTILLVQVEDKIVPIIETGVIELGAEV.

A run of 2 helical transmembrane segments spans residues 31–53 (VNALHLYIWLFLLCFPFTLYMAL) and 57–74 (MVIVGIYCGVIAAMFLLL). Positions 91 to 100 (VEHQTRESKG) are enriched in basic and acidic residues. The tract at residues 91–126 (VEHQTRESKGSRGGTGGANDPVTRREDSNGLGDPGG) is disordered. Asn-256 carries an N-linked (GlcNAc...) asparagine glycan. 3 helical membrane-spanning segments follow: residues 416–438 (VLAVVLAVLVAFLGSVLLIHGFF), 477–499 (AYSRPVYFCLCCGLIWLLHYGSL), and 525–547 (LVIVFTLCFPIIFFVGLLPQVNT). Asn-564 is a glycosylation site (N-linked (GlcNAc...) asparagine). The next 4 membrane-spanning stretches (helical) occupy residues 569 to 591 (LLSALYSILRSIVTVALLYCFCY), 603 to 622 (IPVLFSVFCGLLVAVSYHLS), 675 to 697 (LIVCVVIAVLYFAIHVSTVFIAL), and 704 to 721 (VLYGLLGAVGLLTHYLLP). 3 N-linked (GlcNAc...) asparagine glycosylation sites follow: Asn-988, Asn-1129, and Asn-1391. Disordered stretches follow at residues 1475–1556 (VQSG…HSIP) and 1577–1598 (TDPLSQHHHPHHHPQQHNPTHA). Low complexity-rich tracts occupy residues 1485–1510 (ARASVVSQSSSYRYSSSRHSSLRTST) and 1518–1556 (RSSTSQLSLRTLPTSLQLRLGSTSDPAGPSSSLSSHSIP). A compositionally biased stretch (basic residues) spans 1582–1591 (QHHHPHHHPQ). Asn-1622 is a glycosylation site (N-linked (GlcNAc...) asparagine).

This sequence belongs to the pecanex family.

The protein resides in the membrane. The sequence is that of Pecanex-like protein 1 from Takifugu rubripes (Japanese pufferfish).